The primary structure comprises 162 residues: MSDKIGLFTGSFDPMTNGHLDIIERASRLFDKLYVGIFFNPHKQGFLPIENRKRGLEKAVKHLGNVKVVSSHDELVVDVAKRLGATCLVRGLRNASDLQYEASFDYYNHQLSPDIETIYLHSRPEHLYISSSGVRELLKFGQDIACYVPESILEEIRNEKKD.

Ser-11 contacts substrate. ATP contacts are provided by residues 11–12 (SF) and His-19. Substrate is bound by residues Lys-43, Val-76, and Arg-90. ATP-binding positions include 91-93 (GLR), Glu-101, and 126-132 (HLYISSS).

The protein belongs to the bacterial CoaD family. In terms of assembly, homohexamer. It depends on Mg(2+) as a cofactor.

The protein localises to the cytoplasm. It catalyses the reaction (R)-4'-phosphopantetheine + ATP + H(+) = 3'-dephospho-CoA + diphosphate. It functions in the pathway cofactor biosynthesis; coenzyme A biosynthesis; CoA from (R)-pantothenate: step 4/5. Reversibly transfers an adenylyl group from ATP to 4'-phosphopantetheine, yielding dephospho-CoA (dPCoA) and pyrophosphate. The chain is Phosphopantetheine adenylyltransferase from Streptococcus pneumoniae (strain CGSP14).